A 363-amino-acid chain; its full sequence is D-proline dehydrogenase (363 aa).

3–17 is a binding site for FAD; that stretch reads VAIVGGGIIGLFTAY.

This sequence belongs to the DadA oxidoreductase family. As to quaternary structure, homotetramer. The cofactor is FAD.

The protein resides in the cell membrane. The enzyme catalyses D-proline + A = 1-pyrroline-2-carboxylate + AH2. In terms of biological role, catalyzes the dehydrogenation of D-proline. Can also use other D-amino acids, but with lower efficiency. The polypeptide is D-proline dehydrogenase (dpdh) (Pyrobaculum islandicum (strain DSM 4184 / JCM 9189 / GEO3)).